A 676-amino-acid chain; its full sequence is Intraflagellar transport protein 81 homolog (676 aa).

Ser2 bears the N-acetylserine mark. The CH (calponin-homology)-like region stretch occupies residues 2–121 (SDQIKFIMDS…LKKRAYLARF (120 aa)). Residue Thr61 is modified to Phosphothreonine. Coiled-coil stretches lie at residues 132–258 (LQDE…ADAK), 306–389 (HSDL…FDGT), 416–456 (QIIA…KGIS), and 490–622 (VKKL…REKQ).

This sequence belongs to the IFT81 family. Component of the IFT complex B, at least composed of IFT20, IFT22, IFT25, IFT27, IFT46, IFT52, TRAF3IP1/IFT54, IFT57, IFT74, IFT80, IFT81, and IFT88. Interacts with IFT74; the interaction is direct: within the IFT complex B, IFT74 and IFT81 mediate the transport of tubulin within the cilium. Interacts with tubulin; the interaction is direct. Interacts with IFT57 and IFT70B. Interacts with RABL2/RABL2A; binding is equal in the presence of GTP or GDP. Interacts with IFT88. Interacts (via the IFT74/IFT81 heterodimer) with RABL2B. Interacts with CFAP61. As to expression, highly expressed in testis, moderately in ovary, heart, liver, skeletal muscle, kidney and pancreas, low in prostate, brain, placenta and lung and not detected in spleen, thymus, small intestine and colon. Isoform CDV-1R is abundantly expressed in testis.

It is found in the cell projection. The protein resides in the cilium. It localises to the cytoplasm. The protein localises to the cytoskeleton. Its subcellular location is the cilium basal body. Functionally, component of the intraflagellar transport (IFT) complex B: together with IFT74, forms a tubulin-binding module that specifically mediates transport of tubulin within the cilium. Binds tubulin via its CH (calponin-homology)-like region. Required for ciliogenesis. Required for proper regulation of SHH signaling. Plays an important role during spermatogenesis by modulating the assembly and elongation of the sperm flagella. The polypeptide is Intraflagellar transport protein 81 homolog (IFT81) (Homo sapiens (Human)).